Consider the following 400-residue polypeptide: Argininosuccinate synthase (400 aa).

ATP contacts are provided by residues 11–19 (AYSGGLDTS) and Ala38. L-citrulline-binding residues include Tyr89 and Ser94. Gly119 is a binding site for ATP. Positions 121, 125, and 126 each coordinate L-aspartate. L-citrulline is bound at residue Asn125. L-citrulline is bound by residues Arg129, Ser178, Ser187, Glu263, and Tyr275.

This sequence belongs to the argininosuccinate synthase family. Type 1 subfamily. Homotetramer.

It localises to the cytoplasm. It catalyses the reaction L-citrulline + L-aspartate + ATP = 2-(N(omega)-L-arginino)succinate + AMP + diphosphate + H(+). The protein operates within amino-acid biosynthesis; L-arginine biosynthesis; L-arginine from L-ornithine and carbamoyl phosphate: step 2/3. This is Argininosuccinate synthase from Desulfatibacillum aliphaticivorans.